Here is a 143-residue protein sequence, read N- to C-terminus: Small ribosomal subunit protein uS9 (143 aa).

Residues 123–143 are disordered; it reads RPEPKKFGGRGARARFQKSYR. Over residues 134–143 the composition is skewed to basic residues; the sequence is ARARFQKSYR.

Belongs to the universal ribosomal protein uS9 family.

The chain is Small ribosomal subunit protein uS9 (RPS16) from Eremothecium gossypii (strain ATCC 10895 / CBS 109.51 / FGSC 9923 / NRRL Y-1056) (Yeast).